The chain runs to 320 residues: Phospho-N-acetylmuramoyl-pentapeptide-transferase (320 aa).

Transmembrane regions (helical) follow at residues 6–26 (FLTPLMSGFVITVIFMPLFIG), 54–74 (MGGLVFIVAAVISSIWVAIWL), 81–101 (LWIALFILVLYGLLGFSDDFI), 117–137 (LAGQILGGAVFLAVYFHEGFS), 145–165 (IGTISSSWFFSLFVIVWLVGF), 175–195 (IDGLVAGLAIVSFATYTIIAF), 200–220 (IDVAIFGLTIIGGLIGFLIFN), 226–246 (IFMGDVGSLALGGALAAMSIL), 251–271 (FSLLLIGLVYVIETASVMLQV), and 300–320 (RIDISFWVFSIICSAIYLLIF).

This sequence belongs to the glycosyltransferase 4 family. MraY subfamily. Mg(2+) is required as a cofactor.

It is found in the cell membrane. It catalyses the reaction UDP-N-acetyl-alpha-D-muramoyl-L-alanyl-gamma-D-glutamyl-L-lysyl-D-alanyl-D-alanine + di-trans,octa-cis-undecaprenyl phosphate = Mur2Ac(oyl-L-Ala-gamma-D-Glu-L-Lys-D-Ala-D-Ala)-di-trans,octa-cis-undecaprenyl diphosphate + UMP. The protein operates within cell wall biogenesis; peptidoglycan biosynthesis. Catalyzes the initial step of the lipid cycle reactions in the biosynthesis of the cell wall peptidoglycan: transfers peptidoglycan precursor phospho-MurNAc-pentapeptide from UDP-MurNAc-pentapeptide onto the lipid carrier undecaprenyl phosphate, yielding undecaprenyl-pyrophosphoryl-MurNAc-pentapeptide, known as lipid I. This chain is Phospho-N-acetylmuramoyl-pentapeptide-transferase, found in Latilactobacillus sakei subsp. sakei (strain 23K) (Lactobacillus sakei subsp. sakei).